The chain runs to 223 residues: Phosphoribosylformylglycinamidine synthase subunit PurQ (223 aa).

In terms of domain architecture, Glutamine amidotransferase type-1 spans 4 to 223 (FAVVVFPGTN…FRSMVEWARK (220 aa)). Residue C85 is the Nucleophile of the active site. Residues H196 and E198 contribute to the active site.

In terms of assembly, part of the FGAM synthase complex composed of 1 PurL, 1 PurQ and 2 PurS subunits.

Its subcellular location is the cytoplasm. The catalysed reaction is N(2)-formyl-N(1)-(5-phospho-beta-D-ribosyl)glycinamide + L-glutamine + ATP + H2O = 2-formamido-N(1)-(5-O-phospho-beta-D-ribosyl)acetamidine + L-glutamate + ADP + phosphate + H(+). The enzyme catalyses L-glutamine + H2O = L-glutamate + NH4(+). It participates in purine metabolism; IMP biosynthesis via de novo pathway; 5-amino-1-(5-phospho-D-ribosyl)imidazole from N(2)-formyl-N(1)-(5-phospho-D-ribosyl)glycinamide: step 1/2. In terms of biological role, part of the phosphoribosylformylglycinamidine synthase complex involved in the purines biosynthetic pathway. Catalyzes the ATP-dependent conversion of formylglycinamide ribonucleotide (FGAR) and glutamine to yield formylglycinamidine ribonucleotide (FGAM) and glutamate. The FGAM synthase complex is composed of three subunits. PurQ produces an ammonia molecule by converting glutamine to glutamate. PurL transfers the ammonia molecule to FGAR to form FGAM in an ATP-dependent manner. PurS interacts with PurQ and PurL and is thought to assist in the transfer of the ammonia molecule from PurQ to PurL. The polypeptide is Phosphoribosylformylglycinamidine synthase subunit PurQ (Thermococcus kodakarensis (strain ATCC BAA-918 / JCM 12380 / KOD1) (Pyrococcus kodakaraensis (strain KOD1))).